A 133-amino-acid polypeptide reads, in one-letter code: Ribosome-binding factor A (133 aa).

The protein belongs to the RbfA family. As to quaternary structure, monomer. Binds 30S ribosomal subunits, but not 50S ribosomal subunits or 70S ribosomes.

The protein localises to the cytoplasm. Functionally, one of several proteins that assist in the late maturation steps of the functional core of the 30S ribosomal subunit. Associates with free 30S ribosomal subunits (but not with 30S subunits that are part of 70S ribosomes or polysomes). Required for efficient processing of 16S rRNA. May interact with the 5'-terminal helix region of 16S rRNA. The protein is Ribosome-binding factor A of Chelativorans sp. (strain BNC1).